A 495-amino-acid polypeptide reads, in one-letter code: MRINPTTSGSAVSTLEEKNLGRIAQIIGPVLDVVFPPGKMPNIYNALVVKGRDTVGQQINVICEVQQLLGNNRVRAVAMSATDGLTRGMEVLDTGAALSVPVGGATLGRIFNVLGEPVDNLGPVDTRTTSPIHRSAPAFIQLDTKLSIFETGIKVVDLLAPYRRGGKIGLFGGAGVGKTVLIMELINNIAKAHGGVSVFGGVGERTREGNDLYMEMKESGVINEKNIAESKVALVYGQMNEPPGARMRVGLTALTMAEYFRDVNEQDVLLFIDNIFRFVQAGSEVSALLGRMPSAVGYQPTLSTEMGSLQERITSTKEGSITSIQAVYVPADDLTDPAPATTFAHLDATTVLSRGLAAKGIYPAVDPLDSTSTMLQPRIVGEEHYETAQRVKQTLQRYKELQDIIAILGLDELSEEDRLTVARARKIERFLSQPFFVAEVFTGSPGKYVGLAETIRGFQLILSGELDGLPEQAFYLVGNIDEATAKAMNLEGEKK.

172 to 179 (GGAGVGKT) provides a ligand contact to ATP.

The protein belongs to the ATPase alpha/beta chains family. As to quaternary structure, F-type ATPases have 2 components, CF(1) - the catalytic core - and CF(0) - the membrane proton channel. CF(1) has five subunits: alpha(3), beta(3), gamma(1), delta(1), epsilon(1). CF(0) has four main subunits: a(1), b(1), b'(1) and c(9-12).

It localises to the plastid. The protein localises to the chloroplast thylakoid membrane. It carries out the reaction ATP + H2O + 4 H(+)(in) = ADP + phosphate + 5 H(+)(out). Produces ATP from ADP in the presence of a proton gradient across the membrane. The catalytic sites are hosted primarily by the beta subunits. In Barnardia japonica (Chinese squill), this protein is ATP synthase subunit beta, chloroplastic.